A 157-amino-acid polypeptide reads, in one-letter code: Small ribosomal subunit protein uS7cz/uS7cy (157 aa).

This sequence belongs to the universal ribosomal protein uS7 family. In terms of assembly, part of the 30S ribosomal subunit.

Its subcellular location is the plastid. The protein localises to the chloroplast. In terms of biological role, one of the primary rRNA binding proteins, it binds directly to 16S rRNA where it nucleates assembly of the head domain of the 30S subunit. The chain is Small ribosomal subunit protein uS7cz/uS7cy (rps7-A) from Gnetum parvifolium (Small-leaved jointfir).